The following is a 320-amino-acid chain: Methionyl-tRNA formyltransferase (320 aa).

112-115 (SLLP) is a binding site for (6S)-5,6,7,8-tetrahydrofolate.

This sequence belongs to the Fmt family.

The catalysed reaction is L-methionyl-tRNA(fMet) + (6R)-10-formyltetrahydrofolate = N-formyl-L-methionyl-tRNA(fMet) + (6S)-5,6,7,8-tetrahydrofolate + H(+). In terms of biological role, attaches a formyl group to the free amino group of methionyl-tRNA(fMet). The formyl group appears to play a dual role in the initiator identity of N-formylmethionyl-tRNA by promoting its recognition by IF2 and preventing the misappropriation of this tRNA by the elongation apparatus. This is Methionyl-tRNA formyltransferase from Allorhizobium ampelinum (strain ATCC BAA-846 / DSM 112012 / S4) (Agrobacterium vitis (strain S4)).